A 435-amino-acid chain; its full sequence is MNANLNKAYPNVSLENFFSTPLAATNDAVFAAIQAEYTRQNEQIELIASENIVSKAVMQAQGTCLTNKYAEGYPGRRYYGGCEHVDSVEQIAIERAKMLFQCQYANVQPHSGAQANGAVMLALLQPGDTIMGMSLDAGGHLTHGARPALSGKWFNAVQYGVDRQTLEINYDSVRALALEHKPKMIIAGGSAIPRTIDFAQFRSIVDEVGALLMVDMAHIAGLVATGAHPSPLPHAHVVTTTTHKTLRGPRGGMILTNSEEIHKKINSAVFPGLQGGPLMHVIAAKAVAFGEALGPEFRTYIDSVIDNAKVLAEVLQTRGCDIVTGGTDTHLMLVDLRPKGLKGNQVEQALERAGITCNKNGIPFDEEKPMITSGIRLGTPAGTSRGFGREEFKLIGEWIGDVLDGLVASPEGNPDVEQQVRKQVKALCQRFPLYQ.

Residues L135 and 139 to 141 (GHL) each bind (6S)-5,6,7,8-tetrahydrofolate. K244 carries the N6-(pyridoxal phosphate)lysine modification. E260 lines the (6S)-5,6,7,8-tetrahydrofolate pocket.

It belongs to the SHMT family. Homodimer. Pyridoxal 5'-phosphate serves as cofactor.

It is found in the cytoplasm. It catalyses the reaction (6R)-5,10-methylene-5,6,7,8-tetrahydrofolate + glycine + H2O = (6S)-5,6,7,8-tetrahydrofolate + L-serine. Its pathway is one-carbon metabolism; tetrahydrofolate interconversion. The protein operates within amino-acid biosynthesis; glycine biosynthesis; glycine from L-serine: step 1/1. In terms of biological role, catalyzes the reversible interconversion of serine and glycine with tetrahydrofolate (THF) serving as the one-carbon carrier. This reaction serves as the major source of one-carbon groups required for the biosynthesis of purines, thymidylate, methionine, and other important biomolecules. Also exhibits THF-independent aldolase activity toward beta-hydroxyamino acids, producing glycine and aldehydes, via a retro-aldol mechanism. In Vibrio cholerae serotype O1 (strain ATCC 39315 / El Tor Inaba N16961), this protein is Serine hydroxymethyltransferase 2.